A 161-amino-acid polypeptide reads, in one-letter code: Endoribonuclease YbeY (161 aa).

Residues His-120, His-124, and Asp-130 each coordinate Zn(2+).

Belongs to the endoribonuclease YbeY family. Zn(2+) is required as a cofactor.

It localises to the cytoplasm. Its function is as follows. Single strand-specific metallo-endoribonuclease involved in late-stage 70S ribosome quality control and in maturation of the 3' terminus of the 16S rRNA. The polypeptide is Endoribonuclease YbeY (Chlamydia trachomatis serovar L2 (strain ATCC VR-902B / DSM 19102 / 434/Bu)).